Here is a 79-residue protein sequence, read N- to C-terminus: Large ribosomal subunit protein uL24 (79 aa).

Residues 1 to 29 (MPKLKKLLLKVSTSKPNTNPPSQNEEKGT) form a disordered region. The span at 11-23 (VSTSKPNTNPPSQ) shows a compositional bias: polar residues.

The protein belongs to the universal ribosomal protein uL24 family. In terms of assembly, part of the 50S ribosomal subunit.

Its function is as follows. One of two assembly initiator proteins, it binds directly to the 5'-end of the 23S rRNA, where it nucleates assembly of the 50S subunit. Functionally, one of the proteins that surrounds the polypeptide exit tunnel on the outside of the subunit. In Onion yellows phytoplasma (strain OY-M), this protein is Large ribosomal subunit protein uL24 (rplX).